A 441-amino-acid chain; its full sequence is Lysine histidine transporter 2 (441 aa).

Residues 1 to 32 (MGNSEMSASEVAAAKQKNVDDWLPITSSRNAK) are Cytoplasmic-facing. The chain crosses the membrane as a helical span at residues 33-53 (WWYSAFHNVTAMVGAGVLSLP). Over 54 to 58 (YAMSN) the chain is Extracellular. The helical transmembrane segment at 59–79 (LGWGPGVTIMVMSWIITLYTL) threads the bilayer. Over 80–110 (WQMVEMHEIVPGKRLDRYHELGQHAFGEKLG) the chain is Cytoplasmic. The helical transmembrane segment at 111–131 (LWIVVPQQLIVEVGVDIVYMV) threads the bilayer. The Extracellular portion of the chain corresponds to 132–152 (TGGASLKKVHQLVCPDCKEIR). A helical transmembrane segment spans residues 153–173 (TTFWIMIFASVHFVISHLPNF). Residues 174–175 (NS) lie on the Cytoplasmic side of the membrane. Residues 176 to 196 (ISIISLAAAVMSLTYSTIAWA) form a helical membrane-spanning segment. Residues 197 to 222 (ASVHKGVHPDVDYSPRASTDVGKVFN) lie on the Extracellular side of the membrane. The chain crosses the membrane as a helical span at residues 223–243 (FLNALGDVAFAYAGHNVVLEI). The Cytoplasmic segment spans residues 244-263 (QATIPSTPEMPSKVPMWRGV). The helical transmembrane segment at 264–284 (IVAYIVVAICYFPVAFLGYYI) threads the bilayer. The Extracellular segment spans residues 285 to 300 (FGNSVDDNILITLEKP). A helical transmembrane segment spans residues 301–321 (IWLIAMANMFVVIHVIGSYQI). At 322–347 (FAMPVFDMLETVLVKKMNFNPSFKLR) the chain is on the cytoplasmic side. The chain crosses the membrane as a helical span at residues 348-370 (FITRSLYVAFTMIVAICVPFFGG). Topologically, residues 371 to 373 (LLG) are extracellular. The helical transmembrane segment at 374 to 396 (FFGGFAFAPTTYYLPCIMWLVLK) threads the bilayer. Residues 397-406 (KPKRFGLSWT) lie on the Cytoplasmic side of the membrane. A helical transmembrane segment spans residues 407–427 (ANWFCIIVGVLLTILAPIGGL). At 428-441 (RTIIINAKTYKFFS) the chain is on the extracellular side.

This sequence belongs to the amino acid/polyamine transporter 2 family. Amino acid/auxin permease (AAAP) (TC 2.A.18.2) subfamily. Expressed in flower buds and to lower levels in leaves and stems. Not detected in roots and siliques. Restricted to the tapetum cell layer.

The protein localises to the cell membrane. With respect to regulation, inhibited by diethylstibestrol (DES), 2,4-dinitrophenol (DNP) and carbonlycyanide m-chlorophenylhydrazone (CCCP). Amino acid-proton symporter. Transporter with a broad specificity for neutral and acidic amino acids. Basic amino acids are only marginally transported. Involved in import of amino acids into the tapetum cells for synthesis of compounds important for microspore structure. The sequence is that of Lysine histidine transporter 2 (LHT2) from Arabidopsis thaliana (Mouse-ear cress).